Here is a 304-residue protein sequence, read N- to C-terminus: Probable UDP-3-O-acylglucosamine N-acyltransferase 2, mitochondrial (304 aa).

The N-terminal 47 residues, 1–47 (MAATLWRLYSKSICNSLQGIILNKPFIQKQLLLSSRTRSLSFSSDSQ), are a transit peptide targeting the mitochondrion. UDP-N-acetyl-alpha-D-glucosamine is bound at residue 159-161 (FGF). Hexadecanoate contacts are provided by Asp-209 and Gln-213. His-216 acts as the Proton acceptor in catalysis. Asn-217, Ser-235, and His-253 together coordinate UDP-N-acetyl-alpha-D-glucosamine.

The protein belongs to the transferase hexapeptide repeat family. LpxD subfamily. Homotrimer.

The protein resides in the mitochondrion. The enzyme catalyses a UDP-3-O-[(3R)-3-hydroxyacyl]-alpha-D-glucosamine + a (3R)-hydroxyacyl-[ACP] = a UDP-2-N,3-O-bis[(3R)-3-hydroxyacyl]-alpha-D-glucosamine + holo-[ACP] + H(+). It functions in the pathway glycolipid biosynthesis; lipid IV(A) biosynthesis; lipid IV(A) from (3R)-3-hydroxytetradecanoyl-[acyl-carrier-protein] and UDP-N-acetyl-alpha-D-glucosamine: step 3/6. Functionally, involved in the biosynthesis of lipid A, a phosphorylated glycolipid that in bacteria anchors the lipopolysaccharide to the outer membrane of the cell. Lipid A-like molecules in plants may serve as structural components of the outer membranes of mitochondria and/or chloroplasts, or may be involved in signal transduction or plant defense responses. This chain is Probable UDP-3-O-acylglucosamine N-acyltransferase 2, mitochondrial (LPXD2), found in Arabidopsis thaliana (Mouse-ear cress).